The following is a 485-amino-acid chain: Cobyric acid synthase (485 aa).

The 188-residue stretch at 248 to 435 folds into the GATase cobBQ-type domain; it reads VLKVVVPVLP…LHGLFESPDA (188 aa). Cysteine 329 acts as the Nucleophile in catalysis. Residue histidine 427 is part of the active site.

This sequence belongs to the CobB/CobQ family. CobQ subfamily.

The protein operates within cofactor biosynthesis; adenosylcobalamin biosynthesis. Catalyzes amidations at positions B, D, E, and G on adenosylcobyrinic A,C-diamide. NH(2) groups are provided by glutamine, and one molecule of ATP is hydrogenolyzed for each amidation. The protein is Cobyric acid synthase of Stutzerimonas stutzeri (strain A1501) (Pseudomonas stutzeri).